The chain runs to 272 residues: Phosphate import ATP-binding protein PstB 1 (272 aa).

Residues 26-267 enclose the ABC transporter domain; the sequence is ITIENLDLHY…PMKKQTEDYI (242 aa). 58 to 65 provides a ligand contact to ATP; sequence GPSGCGKS.

Belongs to the ABC transporter superfamily. Phosphate importer (TC 3.A.1.7) family. In terms of assembly, the complex is composed of two ATP-binding proteins (PstB), two transmembrane proteins (PstC and PstA) and a solute-binding protein (PstS).

The protein resides in the cell inner membrane. The catalysed reaction is phosphate(out) + ATP + H2O = ADP + 2 phosphate(in) + H(+). Part of the ABC transporter complex PstSACB involved in phosphate import. Responsible for energy coupling to the transport system. The polypeptide is Phosphate import ATP-binding protein PstB 1 (Vibrio vulnificus (strain YJ016)).